Reading from the N-terminus, the 615-residue chain is Filament-like plant protein 3 (615 aa).

Residues 1–18 show a composition bias toward basic and acidic residues; that stretch reads MDRRSWLWRRKSSEKSPG. The segment at 1–55 is disordered; sequence MDRRSWLWRRKSSEKSPGETESTGSVSSHSERFSDDQRSQSPELNSKPVTREEEA. The span at 19 to 28 shows a compositional bias: polar residues; it reads ETESTGSVSS. The span at 29–38 shows a compositional bias: basic and acidic residues; sequence HSERFSDDQR. Residues 39–48 are compositionally biased toward polar residues; sequence SQSPELNSKP. 2 coiled-coil regions span residues 87 to 121 and 148 to 211; these read AEEA…LEDR and EEAI…KSEE. 2 disordered regions span residues 258-289 and 319-343; these read DNSS…SPSE and PHSE…HVNQ. The segment covering 262–288 has biased composition (polar residues); that stretch reads DLKSSIDNQSDYSGRVSFSDNEMQSPS. Residues 322-343 show a composition bias toward basic and acidic residues; the sequence is EPGRKHSESNKELEKSNAHVNQ. Residues 327-563 adopt a coiled-coil conformation; the sequence is HSESNKELEK…KQELEHHQET (237 aa).

It belongs to the FPP family. Interacts with WPP/MAF proteins. Binds to COG2; this interaction promotes the association between cortical microtubules and EXO70A1. In terms of tissue distribution, accumulates in preferentially xylem cells.

The protein resides in the vesicle. Ensures, when in complex with COG2 and FPP2/VETH2, the correct secondary cell wall (SCW) deposition pattern by recruiting exocyst components to cortical microtubules in xylem cells during secondary cell wall deposition by recruiting EXO70A1. The sequence is that of Filament-like plant protein 3 from Arabidopsis thaliana (Mouse-ear cress).